A 310-amino-acid polypeptide reads, in one-letter code: Low affinity immunoglobulin gamma Fc region receptor II-b (310 aa).

An N-terminal signal peptide occupies residues 1-42; the sequence is MGILSFLPVLATESDWADCKSPQPWGHMLLWTAVLFLAPVAG. Residues 43–217 are Extracellular-facing; that stretch reads TPAAPPKAVL…KPVTITVQAP (175 aa). 2 consecutive Ig-like C2-type domains span residues 48 to 127 and 131 to 213; these read PKAV…VHLT and EWLV…VTIT. Disulfide bonds link Cys-71–Cys-113 and Cys-152–Cys-196. N-linked (GlcNAc...) asparagine glycans are attached at residues Asn-106, Asn-180, and Asn-187. The chain crosses the membrane as a helical span at residues 218 to 240; it reads SSSPMGIIVAVVTGIAVAAIVAA. Residues 241–310 are Cytoplasmic-facing; the sequence is VVALIYCRKK…LEEPDDQNRI (70 aa). Residues 290–295 carry the ITIM motif motif; sequence ITYSLL. A Phosphotyrosine; by SRC-type Tyr-kinases modification is found at Tyr-292.

In terms of assembly, interacts with INPP5D/SHIP1. Interacts with FGR. Interacts with LYN. (Microbial infection) Isoform IIB1 interacts with measles virus protein N. Protein N is released in the blood following lysis of measles infected cells. This interaction presumably block inflammatory immune response. In terms of processing, phosphorylated by the SRC-type Tyr-kinases LYN and BLK. As to expression, is the most broadly distributed Fc-gamma-receptor. Expressed in monocyte, neutrophils, macrophages, basophils, eosinophils, Langerhans cells, B-cells, platelets cells and placenta (endothelial cells). Not detected in natural killer cells.

It is found in the cell membrane. In terms of biological role, receptor for the Fc region of complexed or aggregated immunoglobulins gamma. Low affinity receptor. Involved in a variety of effector and regulatory functions such as phagocytosis of immune complexes and modulation of antibody production by B-cells. Binding to this receptor results in down-modulation of previous state of cell activation triggered via antigen receptors on B-cells (BCR), T-cells (TCR) or via another Fc receptor. Isoform IIB1 fails to mediate endocytosis or phagocytosis. Isoform IIB2 does not trigger phagocytosis. The protein is Low affinity immunoglobulin gamma Fc region receptor II-b (FCGR2B) of Homo sapiens (Human).